We begin with the raw amino-acid sequence, 288 residues long: Polyamine aminopropyltransferase (288 aa).

The PABS domain maps to 9–238; that stretch reads ETLHDQFGQY…GIMTFAWATD (230 aa). Gln33 is a binding site for S-methyl-5'-thioadenosine. Spermidine-binding residues include His64 and Asp88. Residues Glu108 and 140–141 contribute to the S-methyl-5'-thioadenosine site; that span reads DG. Asp158 (proton acceptor) is an active-site residue. Residue 158 to 161 coordinates spermidine; it reads DCTD. Residue Pro165 coordinates S-methyl-5'-thioadenosine.

It belongs to the spermidine/spermine synthase family. In terms of assembly, homodimer or homotetramer.

It localises to the cytoplasm. The catalysed reaction is S-adenosyl 3-(methylsulfanyl)propylamine + putrescine = S-methyl-5'-thioadenosine + spermidine + H(+). Its pathway is amine and polyamine biosynthesis; spermidine biosynthesis; spermidine from putrescine: step 1/1. In terms of biological role, catalyzes the irreversible transfer of a propylamine group from the amino donor S-adenosylmethioninamine (decarboxy-AdoMet) to putrescine (1,4-diaminobutane) to yield spermidine. The protein is Polyamine aminopropyltransferase of Shigella dysenteriae serotype 1 (strain Sd197).